Reading from the N-terminus, the 451-residue chain is MSYFGTDGIRGLFGKFPITPDFVLKLGYVTGQVLVEQNPNPKKKPSVVIGKDTRLSGYVIEAALQAGFNSAGVDVHMIGPLPTPAIAHLTRSFHADAGVVISASHNPYYDNGIKFFAADGRKLSDEMQNAINDKLKTVVEGHADYTQDDPAQLGKHFRINDAKGRYIEFCKGSFPYQYDLSNLTVVIDCANGAGYSVGPRVLRELGANVIAIHNKPNGININDNCGSTHPETLQKAVLEHKADVGIALDGDGDRIIMVDEKGVVVDGDGILYILATKSEAKAEGVVGTQMSNMGLQLALEAAGIALERAKVGDRYVMQGLEAKGWILGGEPSGHILCLDKSRTGDAIIAGLQVLAVMAQTQKSLSQLTEGFKLLPQCLVNVRLEQMQDPYDFPELVAAFEAASKQIEGRGRILIRKSGTEPLIRVMVELDNAEECDKLAHELADKVKQVMA.

The active-site Phosphoserine intermediate is serine 104. Residues serine 104, aspartate 249, aspartate 251, and aspartate 253 each coordinate Mg(2+). Serine 104 is subject to Phosphoserine.

It belongs to the phosphohexose mutase family. Mg(2+) is required as a cofactor. Post-translationally, activated by phosphorylation.

The catalysed reaction is alpha-D-glucosamine 1-phosphate = D-glucosamine 6-phosphate. Catalyzes the conversion of glucosamine-6-phosphate to glucosamine-1-phosphate. The protein is Phosphoglucosamine mutase of Psychrobacter sp. (strain PRwf-1).